The primary structure comprises 78 residues: Small ribosomal subunit protein uS17 (78 aa).

It belongs to the universal ribosomal protein uS17 family. Part of the 30S ribosomal subunit.

In terms of biological role, one of the primary rRNA binding proteins, it binds specifically to the 5'-end of 16S ribosomal RNA. In Rhizobium meliloti (strain 1021) (Ensifer meliloti), this protein is Small ribosomal subunit protein uS17.